The following is a 108-amino-acid chain: uncharacterized protein (108 aa).

This is an uncharacterized protein from Enterobacteria phage T4 (Bacteriophage T4).